The chain runs to 598 residues: Fumarate reductase flavoprotein subunit (598 aa).

FAD-binding positions include Gly-12–Ala-16, Ile-36–Lys-38, Ser-44–Gly-52, His-156–Val-158, and Asp-212. A Tele-8alpha-FAD histidine modification is found at His-45. Active-site residues include His-233 and Arg-249. Residues His-356–Tyr-357, Glu-380, and Arg-391–Leu-397 each bind FAD. Positions Ala-577 to Gly-598 are disordered.

It belongs to the FAD-dependent oxidoreductase 2 family. FRD/SDH subfamily. In terms of assembly, part of an enzyme complex containing four subunits: a flavoprotein (FrdA), an iron-sulfur protein (FrdB), and two hydrophobic anchor proteins (FrdC and FrdD). FAD serves as cofactor.

Its subcellular location is the cell inner membrane. The enzyme catalyses a quinone + succinate = fumarate + a quinol. It carries out the reaction a menaquinone + succinate = a menaquinol + fumarate. In terms of biological role, two distinct, membrane-bound, FAD-containing enzymes are responsible for the catalysis of fumarate and succinate interconversion; the fumarate reductase is used in anaerobic growth, and the succinate dehydrogenase is used in aerobic growth. This Proteus vulgaris protein is Fumarate reductase flavoprotein subunit (frdA).